The chain runs to 436 residues: Serine hydroxymethyltransferase (436 aa).

(6S)-5,6,7,8-tetrahydrofolate contacts are provided by residues L133 and 137–139 (GHI). K242 is subject to N6-(pyridoxal phosphate)lysine.

This sequence belongs to the SHMT family. As to quaternary structure, homodimer. Pyridoxal 5'-phosphate serves as cofactor.

Its subcellular location is the cytoplasm. It carries out the reaction (6R)-5,10-methylene-5,6,7,8-tetrahydrofolate + glycine + H2O = (6S)-5,6,7,8-tetrahydrofolate + L-serine. It functions in the pathway one-carbon metabolism; tetrahydrofolate interconversion. It participates in amino-acid biosynthesis; glycine biosynthesis; glycine from L-serine: step 1/1. Functionally, catalyzes the reversible interconversion of serine and glycine with tetrahydrofolate (THF) serving as the one-carbon carrier. This reaction serves as the major source of one-carbon groups required for the biosynthesis of purines, thymidylate, methionine, and other important biomolecules. Also exhibits THF-independent aldolase activity toward beta-hydroxyamino acids, producing glycine and aldehydes, via a retro-aldol mechanism. The chain is Serine hydroxymethyltransferase from Pelagibacter ubique (strain HTCC1062).